The primary structure comprises 284 residues: Probable palmitoyltransferase ZDHHC24 (284 aa).

Over 1–18 (MGESWAARGAEGAPARMP) the chain is Cytoplasmic. The helical transmembrane segment at 19–39 (LVLTALWAAVVVLELAYVMVL) threads the bilayer. Over 40 to 52 (GPGPPPLGPLARA) the chain is Extracellular. A helical transmembrane segment spans residues 53–73 (LQLALAAYQLLNLLGNVVLFL). Residues 74-137 (RSDPSIRGVM…GCCVGFHNYR (64 aa)) are Cytoplasmic-facing. A DHHC domain is found at 94-144 (AYCYQCQSQVPPRSGHCSACRVCILRRDHHCRLLGCCVGFHNYRPFLCLLL). Catalysis depends on Cys-124, which acts as the S-palmitoyl cysteine intermediate. Residues 138-158 (PFLCLLLHSAGVLLHISVLLG) traverse the membrane as a helical segment. Residues 159-166 (PALSALLQ) lie on the Extracellular side of the membrane. A helical membrane pass occupies residues 167–187 (AHSALYTVALLLLPWLMLLTG). The Cytoplasmic portion of the chain corresponds to 188-195 (KVSLAQFA). A helical membrane pass occupies residues 196-216 (LAFVVDTCVAGALLCGAGLLF). The Extracellular portion of the chain corresponds to 217-284 (HGMLLLRGQT…TPGDVGLVTS (68 aa)).

The protein belongs to the DHHC palmitoyltransferase family.

It localises to the membrane. The catalysed reaction is L-cysteinyl-[protein] + hexadecanoyl-CoA = S-hexadecanoyl-L-cysteinyl-[protein] + CoA. Probable palmitoyltransferase that could catalyze the addition of palmitate onto various protein substrates. This chain is Probable palmitoyltransferase ZDHHC24, found in Mus musculus (Mouse).